The sequence spans 250 residues: Small ribosomal subunit protein uS2 (250 aa).

It belongs to the universal ribosomal protein uS2 family.

This Marinobacter nauticus (strain ATCC 700491 / DSM 11845 / VT8) (Marinobacter aquaeolei) protein is Small ribosomal subunit protein uS2.